The sequence spans 226 residues: MPIMLEDYQKNFLELAIECQALRFGSFKLKSGRESPYFFNLGLFNTGKLLSNLATAYAIAIIQSDLKFDVIFGPAYKGIPLAAIVCVKLAEIGGSKFQNIQYAFNRKEAKDHGEGGIIVGSALENKRILIIDDVMTAGTAINEAFEIISNAKGQVVGSIIALDRQEVVSTDDKEGLSATQTVSKKYGIPVLSIVSLIHIITYLEGRITAEEKSKIEQYLQTYGASA.

Lys-30 provides a ligand contact to 5-phospho-alpha-D-ribose 1-diphosphate. An orotate-binding site is contributed by 38-39 (FF). 5-phospho-alpha-D-ribose 1-diphosphate contacts are provided by residues 76-77 (YK), Arg-106, Lys-107, Lys-110, His-112, and 132-140 (DDVMTAGTA). Residues Thr-136 and Arg-164 each contribute to the orotate site. 2 positions are modified to phosphoserine: Ser-213 and Ser-225.

Belongs to the purine/pyrimidine phosphoribosyltransferase family. PyrE subfamily. As to quaternary structure, homodimer.

The enzyme catalyses orotidine 5'-phosphate + diphosphate = orotate + 5-phospho-alpha-D-ribose 1-diphosphate. The protein operates within pyrimidine metabolism; UMP biosynthesis via de novo pathway; UMP from orotate: step 1/2. In terms of biological role, catalyzes the transfer of a ribosyl phosphate group from 5-phosphoribose 1-diphosphate to orotate, leading to the formation of orotidine monophosphate (OMP). This chain is Orotate phosphoribosyltransferase 1 (URA5), found in Saccharomyces cerevisiae (strain ATCC 204508 / S288c) (Baker's yeast).